The following is a 561-amino-acid chain: Lysine--tRNA ligase (561 aa).

Residues glutamate 409 and glutamate 416 each coordinate Mg(2+).

Belongs to the class-II aminoacyl-tRNA synthetase family. As to quaternary structure, homodimer. Mg(2+) serves as cofactor.

Its subcellular location is the cytoplasm. The catalysed reaction is tRNA(Lys) + L-lysine + ATP = L-lysyl-tRNA(Lys) + AMP + diphosphate. The sequence is that of Lysine--tRNA ligase from Nostoc sp. (strain PCC 7120 / SAG 25.82 / UTEX 2576).